Reading from the N-terminus, the 1480-residue chain is Nonribosomal peptide synthetase-like enzyme fsqF (1480 aa).

The segment at 31-59 (SPFADEPSIDVPSTHLPVVTPRSKTANDR) is disordered. The tract at residues 132–527 (DSARATPHAP…VGRTDDQVKY (396 aa)) is adenylation domain. The Carrier domain occupies 662–741 (STARTIAREY…SIASLIDANS (80 aa)). Position 700 is an O-(pantetheine 4'-phosphoryl)serine (S700). Residues 739 to 754 (ANSSPGRGQPLNTQET) show a composition bias toward polar residues. The tract at residues 739–773 (ANSSPGRGQPLNTQETARLPLRSNGPAPSQQALER) is disordered. Positions 780–1003 (LTGASGFLGI…ACVELGFYNG (224 aa)) are NAD-binding domain. The tract at residues 1100 to 1465 (NAAGTVVHRE…YNTVAEVQEF (366 aa)) is aminotransferase domain.

It belongs to the NRP synthetase family.

Its pathway is secondary metabolite biosynthesis. Functionally, nonribosomal peptide synthetase-like enzyme; part of the gene cluster that mediates the biosynthesis of the isoquinoline alkaloids fumisoquin A, fumisoquin B and fumisoquin C; as well as small amounts of fumipyrrole as a shunt metabolite. The products of the cluster lead to a brown coloration and are important for growth and conidiation. The nonribosomal peptide synthetase-like protein fsqF, which lacks a canonical condensation domain, is required for addition of a serine-derived dehydroalanine moiety to activated tyrosine but is not essential for the subsequent steps leading to isoquinoline formation. A different enzyme, most likely the ATP-grasp enzyme fsqD, is responsible for activation of tyrosine. Three additional enzymes encoded by the fsq cluster, the N-methyltransferase fsqC, the phenol 2-monooxygenase fsqG and the FAD-dependent oxidase fsqB, catalyze the formation of the isoquinoline ring system in the fumisoquins. FsqB converts the fspF thiolation domain-bound (2S,4S,5S)-2-amino-6-(3,4-dihydroxyphenyl)-4-hydroxy-5-(methylamino)hexanoyl into isoquinoline. The cyclization most likely proceeds via a two-step mechanism, beginning with FAD-dependent oxidation of the methyl group to an iminium species followed by electrophilic attack on the deprotonated phenol. This chain is Nonribosomal peptide synthetase-like enzyme fsqF, found in Aspergillus fumigatus (strain ATCC MYA-4609 / CBS 101355 / FGSC A1100 / Af293) (Neosartorya fumigata).